The sequence spans 669 residues: Protein ENTREP3 (669 aa).

The next 3 membrane-spanning stretches (helical) occupy residues 34–54 (LLTL…FSMV), 67–87 (SCPS…IVSW), and 91–111 (FTLV…LSMA). N-linked (GlcNAc...) asparagine glycosylation occurs at asparagine 160. The chain crosses the membrane as a helical span at residues 174-194 (LFSVCGLTICAAIICTLSAIV). Phosphoserine occurs at positions 359 and 390. 3 disordered regions span residues 387-420 (FEDS…PTAA), 445-502 (PRGG…TTSS), and 550-571 (RSAE…SGPT). A compositionally biased stretch (low complexity) spans 399 to 408 (AARSYSCSAP). Serine 494 bears the Phosphoserine mark. Residue serine 575 is modified to Phosphoserine. Residues 597–624 (RRSPDPTGTGAHGYKQVRRSPWGRPGRE) form a disordered region.

The protein belongs to the ENTREP family. May interact with WWOX.

The protein localises to the membrane. This chain is Protein ENTREP3, found in Mus musculus (Mouse).